The primary structure comprises 80 residues: Spermatid-specific protein S2 (80 aa).

Residues 1–36 (VKSRYHQRQYRARKRYAKARRTKKPKRRPKPPRKLR) show a composition bias toward basic residues. Positions 1–44 (VKSRYHQRQYRARKRYAKARRTKKPKRRPKPPRKLRYAPSKKQP) are disordered.

Its subcellular location is the nucleus. It is found in the chromosome. Functionally, involved in nuclear basic protein transition: histones are replaced by spermatid specific proteins which are themselves replaced by protamines in late spermatids. This is Spermatid-specific protein S2 from Scyliorhinus canicula (Small-spotted catshark).